A 194-amino-acid polypeptide reads, in one-letter code: dTTP/UTP pyrophosphatase (194 aa).

The Proton acceptor role is filled by D69.

The protein belongs to the Maf family. YhdE subfamily. It depends on a divalent metal cation as a cofactor.

It localises to the cytoplasm. It catalyses the reaction dTTP + H2O = dTMP + diphosphate + H(+). The enzyme catalyses UTP + H2O = UMP + diphosphate + H(+). Functionally, nucleoside triphosphate pyrophosphatase that hydrolyzes dTTP and UTP. May have a dual role in cell division arrest and in preventing the incorporation of modified nucleotides into cellular nucleic acids. In Symbiobacterium thermophilum (strain DSM 24528 / JCM 14929 / IAM 14863 / T), this protein is dTTP/UTP pyrophosphatase.